Consider the following 203-residue polypeptide: CS5 fimbrial subunit (203 aa).

Positions 1–22 are cleaved as a signal peptide; it reads MKKNLLITSVLAMATVSGSVLA.

The protein resides in the fimbrium. In terms of biological role, major subunit of fimbriae. Fimbriae (also called pili), are polar filaments radiating from the surface of the bacterium to a length of 0.5-1.5 micrometers and numbering 100-300 per cell. They enable bacteria to colonize the epithelium of specific host organs. This chain is CS5 fimbrial subunit, found in Escherichia coli.